We begin with the raw amino-acid sequence, 223 residues long: Phage shock protein A homolog (223 aa).

Residues 29 to 185 adopt a coiled-coil conformation; that stretch reads IDQALRDMRS…AGMEDRNKAM (157 aa).

The protein belongs to the PspA/Vipp/IM30 family.

The polypeptide is Phage shock protein A homolog (Deinococcus radiodurans (strain ATCC 13939 / DSM 20539 / JCM 16871 / CCUG 27074 / LMG 4051 / NBRC 15346 / NCIMB 9279 / VKM B-1422 / R1)).